A 795-amino-acid polypeptide reads, in one-letter code: Phenylalanine--tRNA ligase beta subunit (795 aa).

The region spanning 39–148 is the tRNA-binding domain; that stretch reads KSEFHGVVVG…KETLVGINVY (110 aa). Residues 400–475 form the B5 domain; sequence HKNNTIRLHH…RIYEYNNVHL (76 aa). 3 residues coordinate Mg(2+): Asp453, Asp459, and Asp463. One can recognise an FDX-ACB domain in the interval 701 to 794; the sequence is SKFPTVRRDI…LQKKFQAVLR (94 aa).

This sequence belongs to the phenylalanyl-tRNA synthetase beta subunit family. Type 1 subfamily. As to quaternary structure, tetramer of two alpha and two beta subunits. Mg(2+) is required as a cofactor.

The protein resides in the cytoplasm. It catalyses the reaction tRNA(Phe) + L-phenylalanine + ATP = L-phenylalanyl-tRNA(Phe) + AMP + diphosphate + H(+). This chain is Phenylalanine--tRNA ligase beta subunit (pheT), found in Buchnera aphidicola subsp. Acyrthosiphon pisum (strain APS) (Acyrthosiphon pisum symbiotic bacterium).